Reading from the N-terminus, the 415-residue chain is Corticotropin-releasing factor receptor 1 (415 aa).

An N-terminal signal peptide occupies residues 1-23; that stretch reads MGQRPQLRLVKALLLLGLNPVST. At 24–111 the chain is on the extracellular side; it reads SLQDQQCESL…CQEILNEEKK (88 aa). 3 disulfides stabilise this stretch: Cys-30-Cys-54, Cys-44-Cys-87, and Cys-68-Cys-102. N-linked (GlcNAc...) asparagine glycosylation is found at Asn-38, Asn-45, Asn-78, Asn-90, and Asn-98. The tract at residues 99–108 is important for peptide agonist binding; sequence YSECQEILNE. A helical membrane pass occupies residues 112-142; sequence SKVHYHIAVIINYLGHCISLVALLVAFVLFL. Over 143–149 the chain is Cytoplasmic; the sequence is RLRSIRC. A helical membrane pass occupies residues 150-174; sequence LRNIIHWNLISAFILRNATWFVVQL. Over 175 to 189 the chain is Extracellular; that stretch reads TVSPEVHQSNVAWCR. A disulfide bridge links Cys-188 with Cys-258. A helical transmembrane segment spans residues 190–218; it reads LVTAAYNYFHVTNFFWMFGEGCYLHTAIV. The Cytoplasmic segment spans residues 219–225; it reads LTYSTDR. A helical membrane pass occupies residues 226 to 253; that stretch reads LRKWMFVCIGWGVPFPIIVAWAIGKLYY. Over 254–269 the chain is Extracellular; that stretch reads DNEKCWFGKRPGVYTD. A helical membrane pass occupies residues 270–295; the sequence is YIYQGPMILVLLINFIFLFNIVRILM. The segment at 280-290 is important for antagonist binding; it reads LLINFIFLFNI. Residues 296–306 lie on the Cytoplasmic side of the membrane; the sequence is TKLRASTTSET. Ser-301 carries the phosphoserine; by PKA modification. The chain crosses the membrane as a helical span at residues 307–331; sequence IQYRKAVKATLVLLPLLGITYMLFF. Over 332 to 338 the chain is Extracellular; that stretch reads VNPGEDE. The chain crosses the membrane as a helical span at residues 339–368; it reads VSRVVFIYFNSFLESFQGFFVSVFYCFLNS. Over 369–415 the chain is Cytoplasmic; sequence EVRSAIRKRWRRWQDKHSIRARVARAMSIPTSPTRVSFHSIKQSTAV.

The protein belongs to the G-protein coupled receptor 2 family. Heterodimer; heterodimerizes with GPER1. Interacts (via N-terminal extracellular domain) with CRH and UCN. Interacts with DLG1; this inhibits endocytosis of CRHR1 after agonist binding. C-terminal Ser or Thr residues may be phosphorylated. Post-translationally, phosphorylation at Ser-301 by PKA prevents maximal coupling to Gq-protein, and thereby negatively regulates downstream signaling. In terms of tissue distribution, detected in brain cortex (at protein level).

The protein resides in the cell membrane. Its subcellular location is the endosome. Its function is as follows. G-protein coupled receptor for CRH (corticotropin-releasing factor) and UCN (urocortin). Has high affinity for CRH and UCN. Ligand binding causes a conformation change that triggers signaling via guanine nucleotide-binding proteins (G proteins) and down-stream effectors, such as adenylate cyclase. Promotes the activation of adenylate cyclase, leading to increased intracellular cAMP levels. Inhibits the activity of the calcium channel CACNA1H. Required for normal embryonic development of the adrenal gland and for normal hormonal responses to stress. Plays a role in the response to anxiogenic stimuli. This Mus musculus (Mouse) protein is Corticotropin-releasing factor receptor 1 (Crhr1).